The chain runs to 237 residues: Sulfolipid-1 exporter Sap (237 aa).

Transmembrane regions (helical) follow at residues valine 5–methionine 25, phenylalanine 38–glycine 58, phenylalanine 66–leucine 86, valine 141–leucine 161, alanine 171–serine 191, and aspartate 217–leucine 237.

It belongs to the peptidoglycolipid addressing protein (GAP) (TC 2.A.116) family.

It is found in the cell inner membrane. Functionally, required for the transport across the inner membrane of sulfolipid-1 (SL-1), which is a major cell wall lipid of pathogenic mycobacteria. Could also transport SL1278 (2-palmitoyl-3-(C43)-phthioceranyl-alpha, alpha'-D-trehalose-2'-sulfate), which is the precursor of SL-1. May potentiate SL-1 levels and confer specificity for sulfolipids over structurally similar glycolipids. This is Sulfolipid-1 exporter Sap from Mycobacterium tuberculosis (strain ATCC 25618 / H37Rv).